A 223-amino-acid polypeptide reads, in one-letter code: Endonuclease NucS (223 aa).

It belongs to the NucS endonuclease family.

It is found in the cytoplasm. In terms of biological role, cleaves both 3' and 5' ssDNA extremities of branched DNA structures. The polypeptide is Endonuclease NucS (Mycolicibacterium vanbaalenii (strain DSM 7251 / JCM 13017 / BCRC 16820 / KCTC 9966 / NRRL B-24157 / PYR-1) (Mycobacterium vanbaalenii)).